A 90-amino-acid chain; its full sequence is UPF0329 protein ECU04_1650 (90 aa).

It belongs to the UPF0329 family.

This is UPF0329 protein ECU04_1650 from Encephalitozoon cuniculi (strain GB-M1) (Microsporidian parasite).